We begin with the raw amino-acid sequence, 284 residues long: Diaminopimelate epimerase (284 aa).

The substrate site is built by Asn14 and Asn67. Cys76 serves as the catalytic Proton donor. Substrate-binding positions include Gly77–Asn78, Asn166, Asn199, and Glu217–Arg218. Cys226 acts as the Proton acceptor in catalysis. Gly227–Thr228 contacts substrate.

This sequence belongs to the diaminopimelate epimerase family. As to quaternary structure, homodimer.

It is found in the cytoplasm. It carries out the reaction (2S,6S)-2,6-diaminopimelate = meso-2,6-diaminopimelate. The protein operates within amino-acid biosynthesis; L-lysine biosynthesis via DAP pathway; DL-2,6-diaminopimelate from LL-2,6-diaminopimelate: step 1/1. In terms of biological role, catalyzes the stereoinversion of LL-2,6-diaminopimelate (L,L-DAP) to meso-diaminopimelate (meso-DAP), a precursor of L-lysine and an essential component of the bacterial peptidoglycan. The chain is Diaminopimelate epimerase from Bacillus pumilus (strain SAFR-032).